We begin with the raw amino-acid sequence, 355 residues long: MSELKNDRYLRALLKQPVDCTPVWMMRQAGRYLPEYRATRSVAGDFMSLCKNAELASEVTLQPLRRFPLDAAILFSDILTIPDAMGLGLYFEAGEGPKFERPITCKADVDKIGLPDPEGELQYVMNAVRQIRKDLQGEVPLIGFSGSPWTLATYMVEGGSSKAFTKIKKMMYAEPATLHLLLDKLADSVVEYLNAQIKAGAQSVMVFDTWGGVLTPSDYNEFSLRYMHKIVDGLIRENDGHRVPVTLFTKNGGMWLEQIAATGCDAIGLDWTINIADANRRVGDKVALQGNMDPSILYAQPERIRQEVATILEGYGDEGTGHVFNLGHGIHLDVPPENAGVFVDAVHELSKPYHK.

Residues 27 to 31, D77, Y154, T209, and H328 each bind substrate; that span reads RQAGR.

It belongs to the uroporphyrinogen decarboxylase family. In terms of assembly, homodimer.

Its subcellular location is the cytoplasm. It catalyses the reaction uroporphyrinogen III + 4 H(+) = coproporphyrinogen III + 4 CO2. It functions in the pathway porphyrin-containing compound metabolism; protoporphyrin-IX biosynthesis; coproporphyrinogen-III from 5-aminolevulinate: step 4/4. Catalyzes the decarboxylation of four acetate groups of uroporphyrinogen-III to yield coproporphyrinogen-III. The chain is Uroporphyrinogen decarboxylase from Photobacterium profundum (strain SS9).